The following is a 461-amino-acid chain: Integrator complex subunit 12 (461 aa).

Residues 42–131 (GIDSSYRPTQ…PETRSSPITV (90 aa)) form a disordered region. Lysine 68 is covalently cross-linked (Glycyl lysine isopeptide (Lys-Gly) (interchain with G-Cter in SUMO2)). Basic and acidic residues predominate over residues 88-124 (TAEKIKKEAEKRPADKMKDVTEGIDVPKKPRLEKPET). At serine 127 the chain carries Phosphoserine. The PHD-type zinc-finger motif lies at 158-214 (GLACVVCRQMTVASGNQLVECQECHNLYHQDCHKPQVTDKEVNDPRLVWYCARCTRQ). A Glycyl lysine isopeptide (Lys-Gly) (interchain with G-Cter in SUMO2) cross-link involves residue lysine 253. The segment covering 302-328 (AGPSTAKLNSAAQNSSGKPAASSSNQK) has biased composition (polar residues). The interval 302–443 (AGPSTAKLNS…PTSQESQLNA (142 aa)) is disordered. 2 stretches are compositionally biased toward low complexity: residues 348–357 (GSGNSTSPSV) and 381–436 (VSKV…GPTS).

This sequence belongs to the Integrator subunit 12 family. Component of the Integrator complex, composed of core subunits INTS1, INTS2, INTS3, INTS4, INTS5, INTS6, INTS7, INTS8, INTS9/RC74, INTS10, INTS11/CPSF3L, INTS12, INTS13, INTS14 and INTS15. The core complex associates with protein phosphatase 2A subunits PPP2CA and PPP2R1A, to form the Integrator-PP2A (INTAC) complex. Post-translationally, dephosphorylated at Ser-127 by the PNUTS-PP1 complex, promoting RNA polymerase II transcription pause-release.

It is found in the nucleus. Its function is as follows. Component of the integrator complex, a multiprotein complex that terminates RNA polymerase II (Pol II) transcription in the promoter-proximal region of genes. The integrator complex provides a quality checkpoint during transcription elongation by driving premature transcription termination of transcripts that are unfavorably configured for transcriptional elongation: the complex terminates transcription by (1) catalyzing dephosphorylation of the C-terminal domain (CTD) of Pol II subunit POLR2A/RPB1 and SUPT5H/SPT5, (2) degrading the exiting nascent RNA transcript via endonuclease activity and (3) promoting the release of Pol II from bound DNA. The integrator complex is also involved in terminating the synthesis of non-coding Pol II transcripts, such as enhancer RNAs (eRNAs), small nuclear RNAs (snRNAs), telomerase RNAs and long non-coding RNAs (lncRNAs). Mediates recruitment of cytoplasmic dynein to the nuclear envelope, probably as component of the integrator complex. In Mus musculus (Mouse), this protein is Integrator complex subunit 12 (Ints12).